We begin with the raw amino-acid sequence, 235 residues long: MRFDILTLFPEFFTSPLQTSLLGKALANEVAEVHLTNPRDFTTDKHHRVDDEVYGGGVGMLMKPEPIFAAVESLPCLPRRQIVLFTPQGRPMDQPLFHELANHYDQLVMICGHYEGVDERVAEHLVTQELSLGDFVLTCGEIPALTLLNGVIRLRPGTVGKVESLKKESFETELLDYPQYTRPAEFRGWQVPSVLRSGNHALIERWRQEQQIQRTRDRRPDLYQKWLKKSDTSDP.

S-adenosyl-L-methionine-binding positions include Gly112 and 132-137 (LGDFVL).

This sequence belongs to the RNA methyltransferase TrmD family. In terms of assembly, homodimer.

The protein localises to the cytoplasm. The catalysed reaction is guanosine(37) in tRNA + S-adenosyl-L-methionine = N(1)-methylguanosine(37) in tRNA + S-adenosyl-L-homocysteine + H(+). In terms of biological role, specifically methylates guanosine-37 in various tRNAs. The sequence is that of tRNA (guanine-N(1)-)-methyltransferase from Acaryochloris marina (strain MBIC 11017).